The primary structure comprises 244 residues: Diablo homolog, mitochondrial (244 aa).

A mitochondrion-targeting transit peptide spans 1 to 38; it reads MASLPRRLIWSFSYILRESFPIVSRRNCVSLLRASWRK. Residues 50-54 carry the IAP-binding motif; that stretch reads AIPVG. Over residues 207-218 the composition is skewed to basic and acidic residues; that stretch reads DEIKRTITEDKG. Positions 207–244 are disordered; sequence DEIKRTITEDKGNPPSGGSPRSSLSEEEEIPEAYLRED. Low complexity predominate over residues 220–229; the sequence is PPSGGSPRSS.

It belongs to the Smac/DIABLO protein family. As to quaternary structure, homodimer.

The protein localises to the mitochondrion. Its function is as follows. Promotes apoptosis. Acts by opposing the inhibitory activity of inhibitor of apoptosis proteins (IAP). The protein is Diablo homolog, mitochondrial of Xenopus tropicalis (Western clawed frog).